The following is a 189-amino-acid chain: Elongation factor P (189 aa).

Residue Lys-34 is modified to N6-(3,6-diaminohexanoyl)-5-hydroxylysine.

Belongs to the elongation factor P family. Post-translationally, may be beta-lysylated on the epsilon-amino group of Lys-34 by the combined action of EpmA and EpmB, and then hydroxylated on the C5 position of the same residue by EpmC (if this protein is present). Lysylation is critical for the stimulatory effect of EF-P on peptide-bond formation. The lysylation moiety may extend toward the peptidyltransferase center and stabilize the terminal 3-CCA end of the tRNA. Hydroxylation of the C5 position on Lys-34 may allow additional potential stabilizing hydrogen-bond interactions with the P-tRNA.

Its subcellular location is the cytoplasm. It functions in the pathway protein biosynthesis; polypeptide chain elongation. Involved in peptide bond synthesis. Alleviates ribosome stalling that occurs when 3 or more consecutive Pro residues or the sequence PPG is present in a protein, possibly by augmenting the peptidyl transferase activity of the ribosome. Modification of Lys-34 is required for alleviation. The chain is Elongation factor P from Baumannia cicadellinicola subsp. Homalodisca coagulata.